The sequence spans 497 residues: Putative zinc finger and SCAN domain-containing protein 5D (497 aa).

One can recognise an SCAN box domain in the interval 41-123 (KAGRRMFSCP…DLLRNNRRPK (83 aa)). The interval 148–342 (PASVRDDPRG…GPAGAVSHPN (195 aa)) is disordered. Residues 158 to 167 (VSSQRASSVN) show a composition bias toward polar residues. 2 stretches are compositionally biased toward basic and acidic residues: residues 216-229 (PTLE…REEN) and 249-259 (KEGKEPKKRAS). 5 consecutive C2H2-type zinc fingers follow at residues 352 to 374 (FACG…MRSH), 380 to 402 (FQCN…QRIH), 408 to 430 (YTCD…KRSH), 436 to 458 (YKCK…KLIH), and 464 to 486 (YKCP…QKTH).

The protein localises to the nucleus. This chain is Putative zinc finger and SCAN domain-containing protein 5D, found in Homo sapiens (Human).